A 472-amino-acid polypeptide reads, in one-letter code: 7-dimethylallyltryptophan synthase hasE (472 aa).

L-tryptophan is bound at residue E138. Dimethylallyl diphosphate-binding residues include R154, K239, Y241, K313, Y315, Y393, Y460, and Y464.

This sequence belongs to the tryptophan dimethylallyltransferase family. In terms of assembly, homodimer.

It catalyses the reaction L-tryptophan + dimethylallyl diphosphate = 7-(3-methylbut-2-enyl)-L-tryptophan + diphosphate. The catalysed reaction is an N-terminal L-tryptophanyl-L-alpha-aminoacyl-[peptide] + H2O = an N-terminal L-alpha-aminoacyl-[peptide] + L-tryptophan. It functions in the pathway secondary metabolite biosynthesis. Its function is as follows. 7-dimethylallyltryptophan synthase; part of the gene cluster that mediates the biosynthesis of hexadehydro-astechrome (HAS), a tryptophan-derived iron(III)-complex that acts as a virulence factor in infected mice. Catalyzes the prenylation of L-tryptophan at the C-7 position of the indole moiety. The enzyme is specific for dimethylallyl diphosphate (DMAPP) as prenyl donor. Also accepts D-tryptophan, typtophan-derivatives with modifications at the side chain or the indole ring, and linear and cyclic dipeptides such as H-L-Trp-L-Gly-OH or cyclo-L-Trp-L-Gly as substrates, however with lower efficiency. Also has tryptophan aminopeptidase activity towards linear peptides with a tryptophanyl moiety at the N-terminus. Dipeptides are better substrates than peptides with 3 or more amino acids. Enzymatic rate constants however are much higher for the prenyltransferase activity than for the aminopeptidase activity. Within the hexadehydro-astechrome biosyntetic pathway, hasE catalyzes the prenylation of the hasD-tethered tryptophan or the resulting tethered Trp-Ala dipeptid. The HAS biosynthesis begins with the synthesis of a tethered Trp-Ala dipeptide by the NRPS hasD. The 7-dimethylallyltryptophan synthase hasE then catalyzes the prenylation of the hasD-tethered tryptophan or the resulting tethered Trp-Ala dipeptide at the C-7 position of the indole moiety. HAS biosynthesis continues via tethered intermediates with the succesive actions of the cytochrome P450 monooxygenase hasH, the O-methyltransferase hasC, and the FAD-linked oxidoreductase hasG. The resulting O-methylated diketopiperazine is then released from hasD. Finally, three O-methylated diketopiperazine molecules assemble in a trimeric complex with Fe(III) to produce hexadehydro-astechrome. The protein is 7-dimethylallyltryptophan synthase hasE of Aspergillus fumigatus (strain CBS 144.89 / FGSC A1163 / CEA10) (Neosartorya fumigata).